A 92-amino-acid polypeptide reads, in one-letter code: Small ribosomal subunit protein uS19c (92 aa).

This sequence belongs to the universal ribosomal protein uS19 family.

Its subcellular location is the plastid. The protein localises to the chloroplast. Functionally, protein S19 forms a complex with S13 that binds strongly to the 16S ribosomal RNA. The protein is Small ribosomal subunit protein uS19c of Nicotiana tomentosiformis (Tobacco).